The chain runs to 92 residues: Small ribosomal subunit protein uS19 (92 aa).

This sequence belongs to the universal ribosomal protein uS19 family.

In terms of biological role, protein S19 forms a complex with S13 that binds strongly to the 16S ribosomal RNA. This chain is Small ribosomal subunit protein uS19, found in Rhizobium johnstonii (strain DSM 114642 / LMG 32736 / 3841) (Rhizobium leguminosarum bv. viciae).